Consider the following 955-residue polypeptide: Villin-5 (955 aa).

Gelsolin-like repeat units lie at residues 29–111 (FKPV…DKFL), 152–218 (VHVK…VEDG), 274–339 (LLHE…TVMF), and 644–712 (HFTQ…GSEP). 2 disordered regions span residues 741 to 783 (KGGG…RVRV) and 801 to 895 (NSRN…GLPV). The segment covering 756 to 776 (PTYSGRSTVQDKSQRSRSMSF) has biased composition (polar residues). Residues 817–836 (PKSATPDSSSAPSKSSATAS) show a composition bias toward low complexity. Positions 842–864 (DRPKSVKDGSELEKPKQEEDAKE) are enriched in basic and acidic residues. The segment covering 867–878 (NTMTSRVESLTI) has biased composition (polar residues). The 66-residue stretch at 890 to 955 (DEGLPVYPYD…NRMKIALQLF (66 aa)) folds into the HP domain.

It belongs to the villin/gelsolin family.

It localises to the cytoplasm. The protein localises to the cytoskeleton. In terms of biological role, ca(2+)-regulated actin-binding protein. Binds actin microfilaments (MFs). Involved in actin filament bundling, severing and capping. Caps the barbed end of actin filaments and is able to sever them in a calcium-dependent manner. In Oryza sativa subsp. japonica (Rice), this protein is Villin-5.